The primary structure comprises 1022 residues: Collagen alpha-1(I) chain (1022 aa).

The tract at residues 1–1022 (SAGGISVPGP…PGPPGPPGPP (1022 aa)) is disordered. A 4-hydroxyproline mark is found at Pro20, Pro23, Pro26, Pro35, Pro38, Pro41, Pro56, Pro71, Pro77, Pro86, and Pro92. Positions 28-47 (PQGFQGPPGEPGEPGASGPM) are enriched in low complexity. Residues 59–73 (NGDDGEAGKPGRPGE) show a composition bias toward basic and acidic residues. Residue Lys95 is modified to 5-hydroxylysine; alternate. Lys95 carries O-linked (Gal...) hydroxylysine; alternate glycosylation. Ser101 carries the phosphoserine modification. The span at 109-125 (DAGPAGPKGEPGSPGEN) shows a compositional bias: low complexity. A 4-hydroxyproline mark is found at Pro119, Pro122, Pro128, Pro137, Pro143, Pro164, Pro173, Pro176, Pro203, Pro206, Pro218, Pro224, Pro233, Pro239, Pro242, and Pro257. Over residues 143–161 (PGASGPAGARGNDGAAGAA) the composition is skewed to low complexity. Residues 163-175 (PPGPTGPAGPPGF) show a composition bias toward pro residues. Over residues 209 to 259 (AGAAGPAGNPGADGQPGAKGANGAPGIAGAPGFPGARGPSGPQGPSGAPGP) the composition is skewed to low complexity. 5-hydroxylysine is present on Lys260. Pro266, Pro269, Pro281, Pro290, Pro305, Pro311, Pro320, and Pro326 each carry 4-hydroxyproline. Positions 315-324 (GERGGPGSRG) are enriched in gly residues. Lys335 carries the post-translational modification 5-hydroxylysine. Pro344, Pro353, Pro359, Pro365, Pro374, Pro377, Pro386, Pro395, Pro401, Pro413, Pro422, Pro431, Pro434, Pro452, Pro470, Pro476, Pro482, Pro488, Pro494, Pro500, Pro512, Pro521, Pro533, Pro545, Pro548, Pro554, Pro560, and Pro569 each carry 4-hydroxyproline. A compositionally biased stretch (low complexity) spans 368–394 (KGLTGSPGSPGPDGKTGPPGPAGQDGR). The span at 403 to 422 (ARGQAGVMGFPGPKGAAGEP) shows a compositional bias: low complexity. The span at 464-491 (QGPAGSPGFQGLPGPAGPPGEAGKPGEQ) shows a compositional bias: low complexity. Residues 530–557 (NGAPGNDGAKGDAGAPGAPGSQGAPGLQ) show a composition bias toward low complexity. Lys581 bears the 5-hydroxylysine mark. 3 positions are modified to 4-hydroxyproline: Pro587, Pro602, and Pro608. Residues 614–628 (SGPSGPAGPTGARGA) are compositionally biased toward low complexity. Residue Ser617 is modified to Phosphoserine. 8 positions are modified to 4-hydroxyproline: Pro629, Pro635, Pro638, Pro647, Pro653, Pro671, Pro680, and Pro689. Low complexity predominate over residues 641-668 (AGFAGPPGADGQPGAKGEPGDAGAKGDA). Residues 670–682 (PPGPAGPTGPPGP) are compositionally biased toward pro residues. Lys692 is subject to 5-hydroxylysine. Positions 697–713 (SAGPPGATGFPGAAGRV) are enriched in low complexity. Residues Pro701 and Pro707 each carry the 4-hydroxyproline modification. The residue at position 715 (Pro715) is a 3-hydroxyproline. 16 positions are modified to 4-hydroxyproline: Pro716, Pro725, Pro728, Pro749, Pro758, Pro767, Pro776, Pro794, Pro803, Pro806, Pro812, Pro827, Pro833, Pro839, Pro848, and Pro854. Residues 742 to 751 (ETGPAGRPGE) show a composition bias toward low complexity. Residues 761-776 (TGEKGSPGADGPAGAP) are compositionally biased toward low complexity. Pro residues predominate over residues 826 to 836 (PPGPVGPPGLA). The span at 838–853 (PPGESGREGSPGAEGS) shows a compositional bias: low complexity. A 5-hydroxylysine modification is found at Lys863. Positions 872 to 887 (AGPPGAPGAPGAPGPV) are enriched in pro residues. 4-hydroxyproline occurs at positions 875, 878, and 881. Over residues 908–922 (AGPAGARGPAGPQGP) the composition is skewed to low complexity. The span at 923–937 (RGDKGETGEQGDRGI) shows a compositional bias: basic and acidic residues. 5-hydroxylysine is present on Lys926. At Lys938 the chain carries 5-hydroxylysine; alternate. An O-linked (Gal...) hydroxylysine; alternate glycan is attached at Lys938. 4-hydroxyproline occurs at positions 953, 956, 974, and 989. A compositionally biased stretch (low complexity) spans 956–989 (PGEQGPSGASGPAGPRGPPGSAGSPGKDGLNGLP). Position 994 is a 3-hydroxyproline (Pro994). Residue Pro995 is modified to 4-hydroxyproline. The segment covering 1007 to 1022 (VGPPGPPGPPGPPGPP) has biased composition (pro residues). At Pro1009 the chain carries 3-hydroxyproline. Pro1010 is subject to 4-hydroxyproline. 3-hydroxyproline is present on Pro1012. Pro1013 carries the post-translational modification 4-hydroxyproline. The residue at position 1015 (Pro1015) is a 3-hydroxyproline. 4-hydroxyproline is present on residues Pro1016, Pro1019, and Pro1022.

The protein belongs to the fibrillar collagen family. In terms of assembly, trimers of one alpha 2(I) and two alpha 1(I) chains. Post-translationally, prolines at the third position of the tripeptide repeating unit (G-X-Y) are hydroxylated in some or all of the chains. As to expression, expressed in bone.

Its subcellular location is the secreted. The protein localises to the extracellular space. It localises to the extracellular matrix. Functionally, type I collagen is a member of group I collagen (fibrillar forming collagen). This Mylodon darwinii (Giant ground sloth) protein is Collagen alpha-1(I) chain.